An 87-amino-acid polypeptide reads, in one-letter code: MSDAHGVARDQLRAFIERIERLEEEKKTIADDIKDVYGEAKGMGFDTKILKKVVALRKKDEQERMEEEAILDTYLLALGMIESPPEG.

It belongs to the UPF0335 family.

This Rhizobium johnstonii (strain DSM 114642 / LMG 32736 / 3841) (Rhizobium leguminosarum bv. viciae) protein is UPF0335 protein RL4065.